Reading from the N-terminus, the 145-residue chain is MSGSKSSSETEEGLAFQPSFDASGLVTCVATDAKTGDVLMVAHMNEEALRRTVETGDAWYYSRSRKALWRKGESSGQVQRVLEMRTDCDQDAVWIKVEQQGAACHTGRRSCFYRAVAKGEGAGIRLAFVDAERLFDPAEVYRAKA.

A Mg(2+)-binding site is contributed by Asp87. Residue Cys88 participates in Zn(2+) binding. Mg(2+) contacts are provided by Asp89 and Asp91. Zn(2+) is bound by residues Cys104 and Cys111.

It belongs to the PRA-CH family. In terms of assembly, homodimer. It depends on Mg(2+) as a cofactor. Requires Zn(2+) as cofactor.

It localises to the cytoplasm. The catalysed reaction is 1-(5-phospho-beta-D-ribosyl)-5'-AMP + H2O = 1-(5-phospho-beta-D-ribosyl)-5-[(5-phospho-beta-D-ribosylamino)methylideneamino]imidazole-4-carboxamide. Its pathway is amino-acid biosynthesis; L-histidine biosynthesis; L-histidine from 5-phospho-alpha-D-ribose 1-diphosphate: step 3/9. Its function is as follows. Catalyzes the hydrolysis of the adenine ring of phosphoribosyl-AMP. In Nitrobacter winogradskyi (strain ATCC 25391 / DSM 10237 / CIP 104748 / NCIMB 11846 / Nb-255), this protein is Phosphoribosyl-AMP cyclohydrolase.